We begin with the raw amino-acid sequence, 498 residues long: Fascin-3 (498 aa).

This sequence belongs to the fascin family. As to expression, expressed in testis.

It is found in the cytoplasm. Its subcellular location is the cytoskeleton. Functionally, acts as an actin bundling protein. This Mus musculus (Mouse) protein is Fascin-3 (Fscn3).